The primary structure comprises 142 residues: Large ribosomal subunit protein uL13 (142 aa).

Belongs to the universal ribosomal protein uL13 family. As to quaternary structure, part of the 50S ribosomal subunit.

This protein is one of the early assembly proteins of the 50S ribosomal subunit, although it is not seen to bind rRNA by itself. It is important during the early stages of 50S assembly. The sequence is that of Large ribosomal subunit protein uL13 from Helicobacter hepaticus (strain ATCC 51449 / 3B1).